A 192-amino-acid chain; its full sequence is A-type ATP synthase subunit E (192 aa).

This sequence belongs to the V-ATPase E subunit family. As to quaternary structure, has multiple subunits with at least A(3), B(3), C, D, E, F, H, I and proteolipid K(x).

Its subcellular location is the cell membrane. In terms of biological role, component of the A-type ATP synthase that produces ATP from ADP in the presence of a proton gradient across the membrane. This Methanoculleus marisnigri (strain ATCC 35101 / DSM 1498 / JR1) protein is A-type ATP synthase subunit E.